Here is a 1583-residue protein sequence, read N- to C-terminus: Methyl-CpG-binding domain protein 5/6 homolog sba (1583 aa).

Residues 81–115 (AVHQQQQQHHHQQQQQQQHQQQQQILPAGLVNGNG) are disordered. Residues 83-104 (HQQQQQHHHQQQQQQQHQQQQQ) are compositionally biased toward low complexity. Positions 238-308 (RKTATSYNGN…YLFDFNAQVP (71 aa)) constitute an MBD domain. Disordered stretches follow at residues 427 to 457 (NKLP…PTSQ), 556 to 579 (EPIV…QQQL), 630 to 694 (VTLV…QTQV), 839 to 862 (AELH…AASS), 940 to 980 (PPAQ…ISPQ), 1179 to 1247 (VMSR…RSIC), and 1287 to 1339 (QESP…SFPL). The span at 430–439 (PATNRTATTP) shows a compositional bias: low complexity. Residues 440–449 (TPAPTPPPQH) are compositionally biased toward pro residues. Low complexity predominate over residues 563 to 579 (QQQQQQQQQQLQQQQQL). The segment covering 658–677 (AISTSHESPRQSLSSPTDSV) has biased composition (polar residues). Composition is skewed to low complexity over residues 679 to 693 (SAKS…PQTQ) and 851 to 862 (VSQPSPVAAASS). Composition is skewed to polar residues over residues 1179–1195 (VMSR…TTTC), 1216–1240 (CVSS…PSST), and 1287–1313 (QESP…TVRT). Low complexity predominate over residues 1323–1333 (RGAARAAPSAS). Residues 1346–1408 (IGELIWGPAR…VNSLQSLSEG (63 aa)) form the PWWP domain. Residues 1415–1446 (AQKDTRKSRKLNSQLERAIQEAMTELDNISAS) are a coiled coil. Positions 1471-1497 (IGGQQQYQQQQQQQQQQQSPSSTNNKI) are disordered. Residues 1474 to 1488 (QQQYQQQQQQQQQQQ) show a composition bias toward low complexity.

Component of the polycomb repressive deubiquitinase (PR-DUB) complex, at least composed of caly/calypso, Asx and sba (MDB5/6 homolog). Interacts (via MBD domain) with Asx (via PHD domain); the interaction is important for the stability of the PR-DUB complex.

Its function is as follows. Non-catalytic component of the polycomb repressive deubiquitinase (PR-DUB) complex, a complex that specifically mediates deubiquitination of histone H2A monoubiquitinated at 'Lys-119' (H2AK118ub1). Important for maintaining stability of the PR-DUB complex. Probable epigenetic regulator involved in developmental pattern formation and eye development. The polypeptide is Methyl-CpG-binding domain protein 5/6 homolog sba (Drosophila melanogaster (Fruit fly)).